We begin with the raw amino-acid sequence, 151 residues long: Small ribosomal subunit protein uS19 (151 aa).

Belongs to the universal ribosomal protein uS19 family.

Functionally, protein S19 forms a complex with S13 that binds strongly to the 16S ribosomal RNA. This Thermoplasma acidophilum (strain ATCC 25905 / DSM 1728 / JCM 9062 / NBRC 15155 / AMRC-C165) protein is Small ribosomal subunit protein uS19 (rps19).